Here is a 77-residue protein sequence, read N- to C-terminus: uncharacterized protein (77 aa).

To E.coli YdfK.

This is an uncharacterized protein from Escherichia coli (strain K12).